Consider the following 287-residue polypeptide: Ribonuclease Z (287 aa).

Residues His-64, His-66, Asp-68, His-69, His-124, Asp-191, and His-250 each coordinate Zn(2+). Residue Asp-68 is the Proton acceptor of the active site.

The protein belongs to the RNase Z family. In terms of assembly, homodimer. Zn(2+) is required as a cofactor.

The catalysed reaction is Endonucleolytic cleavage of RNA, removing extra 3' nucleotides from tRNA precursor, generating 3' termini of tRNAs. A 3'-hydroxy group is left at the tRNA terminus and a 5'-phosphoryl group is left at the trailer molecule.. In terms of biological role, zinc phosphodiesterase, which displays some tRNA 3'-processing endonuclease activity. Probably involved in tRNA maturation, by removing a 3'-trailer from precursor tRNA. The protein is Ribonuclease Z of Pyrobaculum aerophilum (strain ATCC 51768 / DSM 7523 / JCM 9630 / CIP 104966 / NBRC 100827 / IM2).